A 419-amino-acid chain; its full sequence is Innexin-2 (419 aa).

4 helical membrane-spanning segments follow: residues 33–53 (AWFT…KQYF), 108–128 (PLVL…WNLF), 184–204 (INYF…MVLL), and 270–290 (LYIC…AGMI).

It belongs to the pannexin family.

Its subcellular location is the cell membrane. The protein resides in the cell junction. It is found in the gap junction. Structural component of the gap junctions. The protein is Innexin-2 (inx-2) of Caenorhabditis elegans.